Here is a 649-residue protein sequence, read N- to C-terminus: Serine/threonine kinase-like domain-containing protein STKLD1 (649 aa).

Over residues 1-13 (MLGPESDGRRPTQ) the composition is skewed to basic and acidic residues. Residues 1–23 (MLGPESDGRRPTQGERGPGYPGE) form a disordered region. Residues 28–379 (YQVLYQLNPG…CNQAITSAVL (352 aa)) form the Protein kinase domain. ATP is bound by residues 34 to 42 (LNPGALGVN) and Lys-57. The disordered stretch occupies residues 621–640 (FSKPGLPPGGSPQPGCTASG).

Belongs to the protein kinase superfamily. Ser/Thr protein kinase family. STKL subfamily.

In Macaca fascicularis (Crab-eating macaque), this protein is Serine/threonine kinase-like domain-containing protein STKLD1 (STKLD1).